The chain runs to 528 residues: Cytochrome P450 monooxygenase ppsD (528 aa).

A helical transmembrane segment spans residues 2-21 (LVLVSLVLCLTGFCLLQWAL). N-linked (GlcNAc...) asparagine glycosylation occurs at Asn137. Position 441 (Cys441) interacts with heme. Asn450 and Asn463 each carry an N-linked (GlcNAc...) asparagine glycan.

Belongs to the cytochrome P450 family. Heme is required as a cofactor.

It is found in the membrane. Cytochrome P450 monooxygenase; part of the gene cluster that mediates the biosynthesis of 2,4'-dihydroxy-3'-methoxypropiophenone. The first step of the pathway is the conversion of acetate into acetyl-CoA by the acyl-CoA ligase ppsA. Acetyl-CoA is then used as a starter unit by the polyketide synthase ppsB and condensed with 4 malonyl-CoA unit to produce the pentaketide backbone. During polyketide extension, the polykedite chain is probably reduced and dehydrated by the KR and PT domains, respectively. O-methylation seems to be catalyzed by an unknown methyltransferase rather than by the CMeT domain of ppsB. Two hydroxylations and one further decarboxylation step catalyzed by yet unknown enzymes are then required to yield 4'-hydroxy-3'-methoxypropiophenone. PpsC functions as a carrier protein to transport 4'-hydroxy-3'-methoxypropiophenone to a specific cell compartment in which 4'-hydroxy-3'-methoxypropiophenone is hydroxylated to 2,4'-dihydroxy-3'-methoxypropiophenone by a still to be identified enzyme. The chain is Cytochrome P450 monooxygenase ppsD from Aspergillus oryzae (strain ATCC 42149 / RIB 40) (Yellow koji mold).